The chain runs to 340 residues: DNA-directed RNA polymerase subunit alpha (340 aa).

Residues 1-236 (MLSLSKNWNT…EQLQLFISFE (236 aa)) form an alpha N-terminal domain (alpha-NTD) region. Residues 251–340 (FSPYLLKRVD…LSKRYEDSYN (90 aa)) are alpha C-terminal domain (alpha-CTD).

Belongs to the RNA polymerase alpha chain family. As to quaternary structure, homodimer. The RNAP catalytic core consists of 2 alpha, 1 beta, 1 beta' and 1 omega subunit. When a sigma factor is associated with the core the holoenzyme is formed, which can initiate transcription.

It catalyses the reaction RNA(n) + a ribonucleoside 5'-triphosphate = RNA(n+1) + diphosphate. Its function is as follows. DNA-dependent RNA polymerase catalyzes the transcription of DNA into RNA using the four ribonucleoside triphosphates as substrates. The chain is DNA-directed RNA polymerase subunit alpha from Rickettsia akari (strain Hartford).